A 180-amino-acid chain; its full sequence is Large ribosomal subunit protein uL6 (180 aa).

This sequence belongs to the universal ribosomal protein uL6 family. Part of the 50S ribosomal subunit.

Functionally, this protein binds to the 23S rRNA, and is important in its secondary structure. It is located near the subunit interface in the base of the L7/L12 stalk, and near the tRNA binding site of the peptidyltransferase center. The sequence is that of Large ribosomal subunit protein uL6 from Anaeromyxobacter sp. (strain Fw109-5).